Reading from the N-terminus, the 273-residue chain is Bis(5'-nucleosyl)-tetraphosphatase, symmetrical (273 aa).

It belongs to the Ap4A hydrolase family.

It catalyses the reaction P(1),P(4)-bis(5'-adenosyl) tetraphosphate + H2O = 2 ADP + 2 H(+). Hydrolyzes diadenosine 5',5'''-P1,P4-tetraphosphate to yield ADP. This is Bis(5'-nucleosyl)-tetraphosphatase, symmetrical from Aliivibrio salmonicida (strain LFI1238) (Vibrio salmonicida (strain LFI1238)).